The primary structure comprises 62 residues: Sec-independent protein translocase protein TatA (62 aa).

A helical transmembrane segment spans residues 10–32; sequence LLIILIIVIAIFGAGKLAGLGGA.

It belongs to the TatA/E family. As to quaternary structure, forms a complex with TatC.

It is found in the cell membrane. Functionally, part of the twin-arginine translocation (Tat) system that transports large folded proteins containing a characteristic twin-arginine motif in their signal peptide across membranes. TatA could form the protein-conducting channel of the Tat system. The chain is Sec-independent protein translocase protein TatA from Chloroflexus aurantiacus (strain ATCC 29366 / DSM 635 / J-10-fl).